A 130-amino-acid chain; its full sequence is MYGVLAHYYSFISSPSVMVNFKHHNAVQLLCARTRDGTAGWERLTHHASYHANYGAYAVLMATSQRKSLVLHRYSAVTAVALQLMPVEMLRRLDQSDWVRGAWIVSETFPTSDPKGFWSDDDSPMGGSED.

Interacts with host DDB1; this interaction promotes STAT2 degradation.

Its function is as follows. Plays a role in the inhibition of host innate immunity by exploiting host DDB1-cullin RING ubiquitin ligases (CRLs). Mechanistically, recruits host DDB1 via a DCAF-like interaction motif to antagonize IFN signaling by STAT2 degradation. The polypeptide is Protein UL145 (UL145) (Homo sapiens (Human)).